Consider the following 325-residue polypeptide: mRNA decay factor CTH1 (325 aa).

2 C3H1-type zinc fingers span residues 204–232 and 242–270; these read LYKT…HGLN and NYRT…HGDD. The disordered stretch occupies residues 284-306; that stretch reads SKDTALTPLPTSLAPSNNDNITN. Over residues 292-306 the composition is skewed to polar residues; it reads LPTSLAPSNNDNITN.

Functionally, binds to specific AU-rich elements (ARE) in the 3'-untranslated region of target mRNAs and promotes their degradation. In response to iron deficiency, promotes the decay of many mRNAs encoding proteins involved in iron-dependent pathways. Negatively regulates primarily iron-dependent mitochondrial processes including respiration and amino acid biosynthesis. The polypeptide is mRNA decay factor CTH1 (CTH1) (Saccharomyces cerevisiae (strain ATCC 204508 / S288c) (Baker's yeast)).